Reading from the N-terminus, the 291-residue chain is 4-hydroxy-tetrahydrodipicolinate synthase (291 aa).

Residue T45 participates in pyruvate binding. The active-site Proton donor/acceptor is the Y131. The active-site Schiff-base intermediate with substrate is the K159. I202 is a binding site for pyruvate.

Belongs to the DapA family. In terms of assembly, homotetramer; dimer of dimers.

Its subcellular location is the cytoplasm. It carries out the reaction L-aspartate 4-semialdehyde + pyruvate = (2S,4S)-4-hydroxy-2,3,4,5-tetrahydrodipicolinate + H2O + H(+). It participates in amino-acid biosynthesis; L-lysine biosynthesis via DAP pathway; (S)-tetrahydrodipicolinate from L-aspartate: step 3/4. Catalyzes the condensation of (S)-aspartate-beta-semialdehyde [(S)-ASA] and pyruvate to 4-hydroxy-tetrahydrodipicolinate (HTPA). This chain is 4-hydroxy-tetrahydrodipicolinate synthase, found in Methanosarcina acetivorans (strain ATCC 35395 / DSM 2834 / JCM 12185 / C2A).